We begin with the raw amino-acid sequence, 384 residues long: L-lactate dehydrogenase (384 aa).

Residues 1–380 enclose the FMN hydroxy acid dehydrogenase domain; sequence MIISSSNDYR…NESCLVEMNK (380 aa). Tyrosine 24 is a binding site for substrate. FMN-binding residues include serine 106 and glutamine 127. Tyrosine 129 is a substrate binding site. Residue threonine 155 participates in FMN binding. Arginine 164 contacts substrate. Residue lysine 251 participates in FMN binding. Histidine 275 serves as the catalytic Proton acceptor. Arginine 278 is a binding site for substrate. 306–330 is an FMN binding site; sequence DSGIRNGLDVVRMLALGADSVMLGR.

The protein belongs to the FMN-dependent alpha-hydroxy acid dehydrogenase family. FMN is required as a cofactor.

The protein localises to the cell inner membrane. It carries out the reaction (S)-lactate + A = pyruvate + AH2. Catalyzes the conversion of L-lactate to pyruvate. Is coupled to the respiratory chain. The chain is L-lactate dehydrogenase from Acinetobacter baylyi (strain ATCC 33305 / BD413 / ADP1).